We begin with the raw amino-acid sequence, 463 residues long: tRNA modification GTPase MnmE (463 aa).

(6S)-5-formyl-5,6,7,8-tetrahydrofolate is bound by residues Arg-29, Glu-91, and Arg-130. The 160-residue stretch at 225-384 (GLKVAIVGRP…LETAILEIVQ (160 aa)) folds into the TrmE-type G domain. Asn-235 contacts K(+). GTP is bound by residues 235 to 240 (NVGKSS), 254 to 260 (TDLPGTT), and 279 to 282 (DTAG). Ser-239 contacts Mg(2+). Thr-254, Leu-256, and Thr-259 together coordinate K(+). Residue Thr-260 participates in Mg(2+) binding. Lys-463 is a binding site for (6S)-5-formyl-5,6,7,8-tetrahydrofolate.

This sequence belongs to the TRAFAC class TrmE-Era-EngA-EngB-Septin-like GTPase superfamily. TrmE GTPase family. As to quaternary structure, homodimer. Heterotetramer of two MnmE and two MnmG subunits. Requires K(+) as cofactor.

It is found in the cytoplasm. Its function is as follows. Exhibits a very high intrinsic GTPase hydrolysis rate. Involved in the addition of a carboxymethylaminomethyl (cmnm) group at the wobble position (U34) of certain tRNAs, forming tRNA-cmnm(5)s(2)U34. This chain is tRNA modification GTPase MnmE, found in Trichormus variabilis (strain ATCC 29413 / PCC 7937) (Anabaena variabilis).